A 138-amino-acid chain; its full sequence is MAEKLKVDLVTPYKKILSEEVDEITATGALGEFSVLPGHAPFLTSLKIGELTYKKSGQIVHLALNWGYFEVEDDKVTVLVETAERADEIDLERAKAALGRAEAALKKLSPEDKDYRVMEAALERALIRMQVAGKAARK.

It belongs to the ATPase epsilon chain family. F-type ATPases have 2 components, CF(1) - the catalytic core - and CF(0) - the membrane proton channel. CF(1) has five subunits: alpha(3), beta(3), gamma(1), delta(1), epsilon(1). CF(0) has three main subunits: a, b and c.

The protein resides in the cell inner membrane. Its function is as follows. Produces ATP from ADP in the presence of a proton gradient across the membrane. This is ATP synthase epsilon chain from Geobacter sulfurreducens (strain ATCC 51573 / DSM 12127 / PCA).